Reading from the N-terminus, the 99-residue chain is Putative septation protein SpoVG (99 aa).

It belongs to the SpoVG family.

Could be involved in septation. This Exiguobacterium sp. (strain ATCC BAA-1283 / AT1b) protein is Putative septation protein SpoVG.